The chain runs to 812 residues: MAPSNGHRNGKHAKSSNKSGNLKRKRVQEDLSSLIKRVEDLDLKAKYESFSDLPISEPTLSGLTSSHFKTLTDIQSRAISHALKGRDVLGAAKTGSGKTLAFLVPILENLYRKQWSDHDGLGALIISPTRELAIQIFEVLRKIGRYHTFSAGLVIGGKSLKEEQERLGRMNILVCTPGRMLQHLDQTAFFETYNLQMLVLDEADRIMDMGFQKTVDAIIGHLPPERQTLLFSATQTKKVSDLARLSLQDPEYVAVHEAASSATPSKLQQHYVVTPLPQKLDTLWSFIRSNLKSKTIVFMSSGKQVRFVYESFRHMQPGIPLLHLHGRQKQGGRLDITTRFSQAQHAVLFSTDVAARGLDFPAVDWVIQLDCPEDADTYIHRVGRTARYERDGRAVLFLDPSEEKGMLRRLEQKRVTVERINVRANKQQSIKNQLQNMCFKDPELKYLGQKAFISYVKSVYIQKDKETFNLKELKLDDFAASLGLPGAPRIKFIKGDDTKERKNASRATAYLTSGDEESDEEGGKKKQPKEKEVRTKYDRMFERRNQDVLAEHYSKLINDDGTIADSKNTEEADEDEDFLSVKRRFDAGDDALHAEDSSASDSDASDSEAEDHTEKKDPKVVKISDKDTLVIDSKRREKLLKSKKKLLKFKGKGTKLVYDDEGNAHELYEMEDEEAFKARGDAKEQQARFLAEEAARTQRADMEDKEIAKQKRREKKEKRKARERELLAEEEREERVAQLVPFDEDEDMGDAGGYSQSSDGEEEAPRPSKRAKVEEPKAVPWYKKEAGKKNDAGEKQIQTLEDLESLATGLLG.

Positions 1-28 (MAPSNGHRNGKHAKSSNKSGNLKRKRVQ) are disordered. The span at 8-26 (RNGKHAKSSNKSGNLKRKR) shows a compositional bias: basic residues. Positions 48–76 (ESFSDLPISEPTLSGLTSSHFKTLTDIQS) match the Q motif motif. The 175-residue stretch at 79–253 (ISHALKGRDV…RLSLQDPEYV (175 aa)) folds into the Helicase ATP-binding domain. Position 92-99 (92-99 (AKTGSGKT)) interacts with ATP. A DEAD box motif is present at residues 201-204 (DEAD). The Helicase C-terminal domain maps to 279-438 (KLDTLWSFIR…SIKNQLQNMC (160 aa)). Disordered regions lie at residues 503-538 (NASRATAYLTSGDEESDEEGGKKKQPKEKEVRTKYD), 560-626 (DGTI…ISDK), and 687-797 (ARFL…EKQI). Basic and acidic residues-rich tracts occupy residues 521–538 (EGGKKKQPKEKEVRTKYD), 579–596 (LSVKRRFDAGDDALHAED), 610–626 (EDHTEKKDPKVVKISDK), and 687–709 (ARFLAEEAARTQRADMEDKEIAK). The span at 710–719 (QKRREKKEKR) shows a compositional bias: basic residues. 2 stretches are compositionally biased toward basic and acidic residues: residues 720-736 (KARERELLAEEEREERV) and 763-794 (EAPRPSKRAKVEEPKAVPWYKKEAGKKNDAGE).

This sequence belongs to the DEAD box helicase family. DDX10/DBP4 subfamily. Interacts with the U3 and U14 snoRNAs. Associates with pre-ribosomal complexes.

The protein resides in the nucleus. The protein localises to the nucleolus. The catalysed reaction is ATP + H2O = ADP + phosphate + H(+). Functionally, ATP-dependent RNA helicase required for ribosome biogenesis. Involved in the release of U14 snoRNA in pre-ribosomal complexes. Required for pre-rRNA cleavage at site A2. The protein is ATP-dependent RNA helicase dbp4 (dbp4) of Emericella nidulans (strain FGSC A4 / ATCC 38163 / CBS 112.46 / NRRL 194 / M139) (Aspergillus nidulans).